A 700-amino-acid chain; its full sequence is UvrABC system protein B (700 aa).

Positions 26–183 constitute a Helicase ATP-binding domain; the sequence is SGLHRGDRIQ…RALVGIQYLR (158 aa). ATP is bound at residue 39 to 46; it reads GVTGSGKT. Residues 92 to 115 carry the Beta-hairpin motif; sequence YYDYYQPEAYVPSSDTYIEKDASI. The Helicase C-terminal domain occupies 430–596; the sequence is QVDDLLHEIR…GVTKSVDEVR (167 aa). Residues 608–627 are disordered; the sequence is REGEAPAPRRLASESAPRSR. The 36-residue stretch at 631-666 folds into the UVR domain; it reads ETLVGELEIAMREAAVALDFEAAARLRDQLFEVRTA. The segment at 667-700 is disordered; it reads LGQAPSEARGNAQAPKRPPGSAPQRRAGGGRRGR.

It belongs to the UvrB family. In terms of assembly, forms a heterotetramer with UvrA during the search for lesions. Interacts with UvrC in an incision complex.

Its subcellular location is the cytoplasm. Its function is as follows. The UvrABC repair system catalyzes the recognition and processing of DNA lesions. A damage recognition complex composed of 2 UvrA and 2 UvrB subunits scans DNA for abnormalities. Upon binding of the UvrA(2)B(2) complex to a putative damaged site, the DNA wraps around one UvrB monomer. DNA wrap is dependent on ATP binding by UvrB and probably causes local melting of the DNA helix, facilitating insertion of UvrB beta-hairpin between the DNA strands. Then UvrB probes one DNA strand for the presence of a lesion. If a lesion is found the UvrA subunits dissociate and the UvrB-DNA preincision complex is formed. This complex is subsequently bound by UvrC and the second UvrB is released. If no lesion is found, the DNA wraps around the other UvrB subunit that will check the other stand for damage. This Gemmatimonas aurantiaca (strain DSM 14586 / JCM 11422 / NBRC 100505 / T-27) protein is UvrABC system protein B.